A 201-amino-acid chain; its full sequence is MSKRIAGPEIERLIQLLARVPGLGPRSARRAALHLIKKKEALLVPLGGAMQEAAEKVRICSCCGNVDTSDPCTICTDERRDPTTLIVVEDVSDLWALERAGTMNVRYHVLGGRLSPLDGIGPDDLNIKGLVERVSTGEIKEVILAVNATVEGQTTAHYITDQLSSFDVRVTRLAHGVPVGGELDYLDEGTLAAALRARTTL.

The segment at 60 to 75 (CSCCGNVDTSDPCTIC) adopts a C4-type zinc-finger fold. The Toprim domain maps to 83–178 (TTLIVVEDVS…RVTRLAHGVP (96 aa)).

It belongs to the RecR family.

Functionally, may play a role in DNA repair. It seems to be involved in an RecBC-independent recombinational process of DNA repair. It may act with RecF and RecO. This is Recombination protein RecR from Brucella anthropi (strain ATCC 49188 / DSM 6882 / CCUG 24695 / JCM 21032 / LMG 3331 / NBRC 15819 / NCTC 12168 / Alc 37) (Ochrobactrum anthropi).